Reading from the N-terminus, the 279-residue chain is S-methyl-5'-thioadenosine phosphorylase (279 aa).

Phosphate contacts are provided by residues S13, 55-56, and 88-89; these read RH and TA. Position 191 (M191) interacts with substrate. Residue T192 participates in phosphate binding. Position 215–217 (215–217) interacts with substrate; the sequence is DYD.

It belongs to the PNP/MTAP phosphorylase family. MTAP subfamily. Homotrimer.

Its subcellular location is the cytoplasm. It localises to the nucleus. The enzyme catalyses S-methyl-5'-thioadenosine + phosphate = 5-(methylsulfanyl)-alpha-D-ribose 1-phosphate + adenine. The protein operates within amino-acid biosynthesis; L-methionine biosynthesis via salvage pathway; S-methyl-5-thio-alpha-D-ribose 1-phosphate from S-methyl-5'-thioadenosine (phosphorylase route): step 1/1. Its function is as follows. Catalyzes the reversible phosphorylation of S-methyl-5'-thioadenosine (MTA) to adenine and 5-methylthioribose-1-phosphate. Involved in the breakdown of MTA, a major by-product of polyamine biosynthesis. Responsible for the first step in the methionine salvage pathway after MTA has been generated from S-adenosylmethionine. Has broad substrate specificity with 6-aminopurine nucleosides as preferred substrates. This chain is S-methyl-5'-thioadenosine phosphorylase, found in Anopheles darlingi (Mosquito).